A 158-amino-acid chain; its full sequence is UPF0336 protein Mb0654 (158 aa).

Belongs to the UPF0336 family.

The protein is UPF0336 protein Mb0654 of Mycobacterium bovis (strain ATCC BAA-935 / AF2122/97).